We begin with the raw amino-acid sequence, 43 residues long: METATLVXISISGSLVSFTGYALYTAFGQPSQQLRDPFEEHGD.

The helical transmembrane segment at 5–27 (TLVXISISGSLVSFTGYALYTAF) threads the bilayer.

It belongs to the PsbN family.

The protein resides in the plastid. Its subcellular location is the chloroplast thylakoid membrane. In terms of biological role, may play a role in photosystem I and II biogenesis. The polypeptide is Protein PsbN (Calycanthus floridus (Eastern sweetshrub)).